The primary structure comprises 82 residues: MGNVYTKDIKRVARELYDKFKDQASDKYDDNKKLVDEYVNVSSKKVKNRIAGYLTRYVKISKNKVEAQEASEELEEDLESET.

This sequence belongs to the eukaryotic ribosomal protein eS17 family.

The protein is Small ribosomal subunit protein eS17 of Sulfolobus acidocaldarius (strain ATCC 33909 / DSM 639 / JCM 8929 / NBRC 15157 / NCIMB 11770).